The chain runs to 286 residues: Release factor glutamine methyltransferase (286 aa).

Positions 148 and 194 each coordinate S-adenosyl-L-methionine. 194–197 (NPPY) is a binding site for substrate.

This sequence belongs to the protein N5-glutamine methyltransferase family. PrmC subfamily.

It catalyses the reaction L-glutaminyl-[peptide chain release factor] + S-adenosyl-L-methionine = N(5)-methyl-L-glutaminyl-[peptide chain release factor] + S-adenosyl-L-homocysteine + H(+). Its function is as follows. Methylates the class 1 translation termination release factors RF1/PrfA and RF2/PrfB on the glutamine residue of the universally conserved GGQ motif. This Leptospira interrogans serogroup Icterohaemorrhagiae serovar Lai (strain 56601) protein is Release factor glutamine methyltransferase.